A 471-amino-acid polypeptide reads, in one-letter code: MKDSIVLYSALGRGHLVSMVELGKLILSHHPSLSITILFLTPPPNQDTPTSPTAFTCDATAKYIAAVTAATPSITFHRIPQISIPTVLPPMALTFELCRATGHHLRRILTSISQTSNLKAIVLDFMNYSAARVTNTLQIPTYFYYTSGASTLAVLFQQIIIHQNNTKSIKDLNMHLLIPGLPKIHTDDMPEQVQDRENEGYEVFIDIATCMRDSDGVIVNTFEAMEGRVMEAFNEGLMEGPTPPLFCIGPVISSAPCRVDDDGCLSWLDSQPSHSVVFLSFGSMGRFSRTQLREIAIGLEKSEQRFLWVVRSEFEEGDSVEPPSLDELLPEGFLERTKGKGMVLRDWAPQAAILSHDSVGGFVTHCGWNSVLEAVCEGVPMVAWPLYAEQKLNKVILVEEMKVGLAVKQNKDGLVSSTELGDRVRELMDSDRGKEIRQKIFKMKMSANEAMAKGGSSIMALNRLVEVWREH.

H15 (proton acceptor) is an active-site residue. H15 provides a ligand contact to an anthocyanidin. D124 functions as the Charge relay in the catalytic mechanism. T146, A348, Q350, H365, W368, N369, S370, and E373 together coordinate UDP-alpha-D-glucose. Residue A388 coordinates an anthocyanidin. UDP-alpha-D-glucose is bound by residues E389 and Q390.

This sequence belongs to the UDP-glycosyltransferase family. As to expression, expressed in roots. Detected in stems and leaves.

The enzyme catalyses a 7-hydroxyisoflavone + UDP-alpha-D-glucose = a 7-hydroxyisoflavone 7-O-beta-D-glucoside + UDP + H(+). Its function is as follows. Isoflavone 7-O-glucosyltransferase converting daidzein to daidzin, genistein to genistin and formononetin to ononin. Shows some activity toward the chalcone isoliquiritigenin, the flavanones liquiritigenin and naringenin, and the flavone apigenin, but not toward cyanidin, luteolin, kaempferol, quercetin, daidzin and puerarin. In Pueraria montana var. lobata (Kudzu vine), this protein is UDP-glycosyltransferase 1.